Here is a 642-residue protein sequence, read N- to C-terminus: Myrosinase-binding protein 2 (642 aa).

Jacalin-type lectin domains lie at Ser-2 to Ala-151, Leu-156 to Pro-291, Pro-334 to Pro-477, and Ser-490 to Pro-633. The segment covering Thr-296–Pro-334 has biased composition (pro residues). Disordered stretches follow at residues Thr-296–Glu-338 and Thr-479–Asn-499. The span at Thr-479–Ser-490 shows a compositional bias: low complexity.

Belongs to the jacalin lectin family. Expressed in flowers. Detected mainly in ovules and styles of immature flowers, but also in pistils, styles, stamens, petals and embryos. Not detected in leaves.

The polypeptide is Myrosinase-binding protein 2 (F-ATMBP) (Arabidopsis thaliana (Mouse-ear cress)).